We begin with the raw amino-acid sequence, 241 residues long: Putative inactive serine protease 58 (241 aa).

Positions 1 to 17 (MKLAFLCILSTLLRTFA) are cleaved as a signal peptide. A Peptidase S1 domain is found at 18–239 (YNPDHIAGTT…YLPWIEDTMK (222 aa)). Residues C41 and C57 are joined by a disulfide bond. Catalysis depends on charge relay system residues H56 and D101. 3 cysteine pairs are disulfide-bonded: C133-C201, C165-C180, and C191-C215. An N-linked (GlcNAc...) asparagine glycan is attached at N156.

It belongs to the peptidase S1 family.

The protein resides in the secreted. It carries out the reaction Preferential cleavage: Arg-|-Xaa, Lys-|-Xaa.. This chain is Putative inactive serine protease 58 (Prss58), found in Mus musculus (Mouse).